Consider the following 353-residue polypeptide: Photosystem II protein D1 (353 aa).

T2 bears the N-acetylthreonine mark. T2 is modified (phosphothreonine). Helical transmembrane passes span 29-46 (YIGW…TATS), 118-133 (HFFL…EWEL), and 142-156 (WIAV…AATA). H118 provides a ligand contact to chlorophyll a. Residue Y126 participates in pheophytin a binding. The [CaMn4O5] cluster site is built by D170 and E189. The helical transmembrane segment at 197–218 (FHMLGVAGVFGGSLFSAMHGSL) threads the bilayer. Residue H198 coordinates chlorophyll a. Residues H215 and 264–265 (SF) each bind a quinone. Residue H215 participates in Fe cation binding. Position 272 (H272) interacts with Fe cation. The chain crosses the membrane as a helical span at residues 274 to 288 (FLAAWPVVGIWFTAL). [CaMn4O5] cluster contacts are provided by H332, E333, D342, and A344. Residues 345–353 (VVEAPAVNG) constitute a propeptide that is removed on maturation.

This sequence belongs to the reaction center PufL/M/PsbA/D family. In terms of assembly, PSII is composed of 1 copy each of membrane proteins PsbA, PsbB, PsbC, PsbD, PsbE, PsbF, PsbH, PsbI, PsbJ, PsbK, PsbL, PsbM, PsbT, PsbX, PsbY, PsbZ, Psb30/Ycf12, at least 3 peripheral proteins of the oxygen-evolving complex and a large number of cofactors. It forms dimeric complexes. The cofactor is The D1/D2 heterodimer binds P680, chlorophylls that are the primary electron donor of PSII, and subsequent electron acceptors. It shares a non-heme iron and each subunit binds pheophytin, quinone, additional chlorophylls, carotenoids and lipids. D1 provides most of the ligands for the Mn4-Ca-O5 cluster of the oxygen-evolving complex (OEC). There is also a Cl(-1) ion associated with D1 and D2, which is required for oxygen evolution. The PSII complex binds additional chlorophylls, carotenoids and specific lipids.. Post-translationally, tyr-161 forms a radical intermediate that is referred to as redox-active TyrZ, YZ or Y-Z. In terms of processing, C-terminally processed by CTPA; processing is essential to allow assembly of the oxygen-evolving complex and thus photosynthetic growth.

Its subcellular location is the plastid. It localises to the chloroplast thylakoid membrane. The enzyme catalyses 2 a plastoquinone + 4 hnu + 2 H2O = 2 a plastoquinol + O2. Photosystem II (PSII) is a light-driven water:plastoquinone oxidoreductase that uses light energy to abstract electrons from H(2)O, generating O(2) and a proton gradient subsequently used for ATP formation. It consists of a core antenna complex that captures photons, and an electron transfer chain that converts photonic excitation into a charge separation. The D1/D2 (PsbA/PsbD) reaction center heterodimer binds P680, the primary electron donor of PSII as well as several subsequent electron acceptors. This Chlorella vulgaris (Green alga) protein is Photosystem II protein D1.